The sequence spans 804 residues: Leucine--tRNA ligase (804 aa).

The 'HIGH' region motif lies at 40 to 51 (PYPSGAGLHVGH). A 'KMSKS' region motif is present at residues 574 to 578 (KMSKS). ATP is bound at residue lysine 577.

This sequence belongs to the class-I aminoacyl-tRNA synthetase family.

Its subcellular location is the cytoplasm. It catalyses the reaction tRNA(Leu) + L-leucine + ATP = L-leucyl-tRNA(Leu) + AMP + diphosphate. The sequence is that of Leucine--tRNA ligase from Shouchella clausii (strain KSM-K16) (Alkalihalobacillus clausii).